The sequence spans 224 residues: A-factor barrier protein 1 (224 aa).

The signal sequence occupies residues 1–25 (MIFAPSFSLIKNILLVSFLISHSFA). 3 N-linked (GlcNAc...) asparagine glycosylation sites follow: Asn-148, Asn-181, and Asn-191. Asn-203 carries the GPI-anchor amidated asparagine lipid modification. A propeptide spans 204 to 224 (GAHAKSLYFPMALFGIFAVAL) (removed in mature form).

It belongs to the SRP1/TIP1 family. Post-translationally, the GPI-anchor is attached to the protein in the endoplasmic reticulum and serves to target the protein to the cell surface. There, the glucosamine-inositol phospholipid moiety is cleaved off and the GPI-modified mannoprotein is covalently attached via its lipidless GPI glycan remnant to the 1,6-beta-glucan of the outer cell wall layer.

It is found in the secreted. Its subcellular location is the cell wall. It localises to the membrane. Its function is as follows. MATalpha-specific protein that interferes with a-factor, the pheromone secreted by MATa cells. Contributes to mating efficiency. Acts to bind and sequester a-factor rather than to degrade it, and promotes the efficient mating of MATalpha cells by keeping the a-factor concentration at the plasma membrane within the narrow range needed for accurate pheromone gradient detection. This is A-factor barrier protein 1 from Saccharomyces cerevisiae (strain ATCC 204508 / S288c) (Baker's yeast).